The primary structure comprises 377 residues: Histone deacetylase 8 (377 aa).

Residues 14–324 (LVPVYIYSPE…WTYLTGVILG (311 aa)) are histone deacetylase. A Phosphoserine modification is found at S39. D101 is a substrate binding site. H143 serves as the catalytic Proton acceptor. G151 is a binding site for substrate. A divalent metal cation is bound by residues D178, H180, and D267. Y306 contacts substrate.

Belongs to the histone deacetylase family. HD type 1 subfamily. In terms of assembly, interacts with PEPB2-MYH11, a fusion protein consisting of the 165 N-terminal residues of CBF-beta (PEPB2) with the tail region of MYH11 produced by the inversion Inv(16)(p13q22), a translocation associated with acute myeloid leukemia of M4EO subtype. The PEPB2-MYH1 fusion protein also interacts with RUNX1, a well known transcriptional regulator, suggesting that the interaction with HDAC8 may participate in the conversion of RUNX1 into a constitutive transcriptional repressor. Interacts with CBFA2T3. Interacts with phosphorylated SMG5/EST1B; this interaction protects SMG5 from ubiquitin-mediated degradation. Associates with alpha-SMA (smooth muscle alpha-actin). The cofactor is a divalent metal cation. Post-translationally, phosphorylated by PKA on serine 39. Phosphorylation reduces deacetylase activity observed preferentially on histones H3 and H4. Weakly expressed in most tissues. Expressed at higher level in heart, brain, kidney and pancreas and also in liver, lung, placenta, prostate and kidney.

The protein resides in the nucleus. It is found in the chromosome. Its subcellular location is the cytoplasm. The enzyme catalyses N(6)-acetyl-L-lysyl-[histone] + H2O = L-lysyl-[histone] + acetate. It carries out the reaction N(6)-acetyl-L-lysyl-[protein] + H2O = L-lysyl-[protein] + acetate. The catalysed reaction is N(6)-(2E)-butenoyl-L-lysyl-[protein] + H2O = (2E)-2-butenoate + L-lysyl-[protein]. Its activity is inhibited by trichostatin A (TSA), suberoylanilide hydroxamic acid (SAHA), 3-(1-methyl-4-phenylacetyl-1H-2-pyrrolyl)-N-hydroxy-2-propenamide (APHA), 4-dimethylamino-N-(6-hydroxycarbamoyethyl)benzamide-N-hydroxy-7-(4-dimethylaminobenzoyl)aminoheptanamide (MS-344), 5-(4-methyl-benzoylamino)-biphenyl-3,4'-dicarboxylic acid 3-dimethylamide 4'-hydroxyamide (CRA-A) and butyrate. Histone deacetylase that catalyzes the deacetylation of lysine residues on the N-terminal part of the core histones (H2A, H2B, H3 and H4). Histone deacetylation gives a tag for epigenetic repression and plays an important role in transcriptional regulation, cell cycle progression and developmental events. Histone deacetylases act via the formation of large multiprotein complexes. Also involved in the deacetylation of cohesin complex protein SMC3 regulating release of cohesin complexes from chromatin. May play a role in smooth muscle cell contractility. In addition to protein deacetylase activity, also has protein-lysine deacylase activity: acts as a protein decrotonylase by mediating decrotonylation ((2E)-butenoyl) of histones. This chain is Histone deacetylase 8, found in Homo sapiens (Human).